We begin with the raw amino-acid sequence, 197 residues long: Recombination protein RecR (197 aa).

The C4-type zinc-finger motif lies at 56-71 (CNVCFHFSADPICEIC). Residues 79–173 (QTICVVADSR…KVTRIAFGLP (95 aa)) form the Toprim domain.

This sequence belongs to the RecR family.

May play a role in DNA repair. It seems to be involved in an RecBC-independent recombinational process of DNA repair. It may act with RecF and RecO. This is Recombination protein RecR from Rippkaea orientalis (strain PCC 8801 / RF-1) (Cyanothece sp. (strain PCC 8801)).